A 203-amino-acid chain; its full sequence is GTP cyclohydrolase-2 (203 aa).

49–53 is a GTP binding site; it reads RIHSE. Positions 54, 65, and 67 each coordinate Zn(2+). GTP contacts are provided by residues Gln-70, 92 to 94, and Thr-114; that span reads EGR. Asp-126 serves as the catalytic Proton acceptor. Arg-128 acts as the Nucleophile in catalysis. GTP-binding residues include Thr-149 and Lys-154.

It belongs to the GTP cyclohydrolase II family. The cofactor is Zn(2+).

The enzyme catalyses GTP + 4 H2O = 2,5-diamino-6-hydroxy-4-(5-phosphoribosylamino)-pyrimidine + formate + 2 phosphate + 3 H(+). It functions in the pathway cofactor biosynthesis; riboflavin biosynthesis; 5-amino-6-(D-ribitylamino)uracil from GTP: step 1/4. Catalyzes the conversion of GTP to 2,5-diamino-6-ribosylamino-4(3H)-pyrimidinone 5'-phosphate (DARP), formate and pyrophosphate. In Shewanella sp. (strain MR-7), this protein is GTP cyclohydrolase-2.